The primary structure comprises 553 residues: Arginine--tRNA ligase (553 aa).

A 'HIGH' region motif is present at residues 130-140; sequence ANPTGDLHIGH.

Belongs to the class-I aminoacyl-tRNA synthetase family. In terms of assembly, monomer.

It is found in the cytoplasm. The enzyme catalyses tRNA(Arg) + L-arginine + ATP = L-arginyl-tRNA(Arg) + AMP + diphosphate. This is Arginine--tRNA ligase from Staphylococcus aureus (strain USA300 / TCH1516).